A 156-amino-acid chain; its full sequence is 6,7-dimethyl-8-ribityllumazine synthase (156 aa).

5-amino-6-(D-ribitylamino)uracil contacts are provided by residues Phe23, 57–59, and 81–83; these read AFE and AVI. 86 to 87 contributes to the (2S)-2-hydroxy-3-oxobutyl phosphate binding site; sequence ST. His89 functions as the Proton donor in the catalytic mechanism. Phe114 contributes to the 5-amino-6-(D-ribitylamino)uracil binding site. Arg128 is a (2S)-2-hydroxy-3-oxobutyl phosphate binding site.

Belongs to the DMRL synthase family.

The enzyme catalyses (2S)-2-hydroxy-3-oxobutyl phosphate + 5-amino-6-(D-ribitylamino)uracil = 6,7-dimethyl-8-(1-D-ribityl)lumazine + phosphate + 2 H2O + H(+). It participates in cofactor biosynthesis; riboflavin biosynthesis; riboflavin from 2-hydroxy-3-oxobutyl phosphate and 5-amino-6-(D-ribitylamino)uracil: step 1/2. In terms of biological role, catalyzes the formation of 6,7-dimethyl-8-ribityllumazine by condensation of 5-amino-6-(D-ribitylamino)uracil with 3,4-dihydroxy-2-butanone 4-phosphate. This is the penultimate step in the biosynthesis of riboflavin. This is 6,7-dimethyl-8-ribityllumazine synthase from Campylobacter curvus (strain 525.92).